The primary structure comprises 96 residues: QLRYREAVLRAVDRLNEQSSEANLYRLLELDQPPKADEDPGTPKPVSFTVKETVCPRPTRQPPELCDFKEKQCVGTVTLNPSIHSLDISCNEIQSV.

The residue at position 1 (Gln-1) is a Pyrrolidone carboxylic acid. The disordered stretch occupies residues 31–50; that stretch reads DQPPKADEDPGTPKPVSFTV. 2 disulfides stabilise this stretch: Cys-55-Cys-66 and Cys-73-Cys-90.

It belongs to the cathelicidin family.

The protein resides in the secreted. Its function is as follows. Probably a microbicidal peptide. This is Cathelin from Sus scrofa (Pig).